A 209-amino-acid chain; its full sequence is MSKGILGKKVGMTQVFAENGDVIPVTVIEAAPNVVLQKKTVDSDGYEAVQLGFDDQKQNNANKPEKGHAAKAETAPKRFIKEIRGVNLDEFEVGQEIKVDAFAEGDIVDVTGTSKGKGFAGAIKRHNQARGPMSHGSRYHRRPGSMGPVDPNRVFKGKALPGRMGGEQVTVQNLEIIKVDAERNLLLVKGNVPGAKKSYVTVRSAIKSK.

Positions Gln-128–Asn-152 are disordered.

The protein belongs to the universal ribosomal protein uL3 family. In terms of assembly, part of the 50S ribosomal subunit. Forms a cluster with proteins L14 and L19.

In terms of biological role, one of the primary rRNA binding proteins, it binds directly near the 3'-end of the 23S rRNA, where it nucleates assembly of the 50S subunit. In Halalkalibacterium halodurans (strain ATCC BAA-125 / DSM 18197 / FERM 7344 / JCM 9153 / C-125) (Bacillus halodurans), this protein is Large ribosomal subunit protein uL3.